The chain runs to 559 residues: Alkaline phosphatase PhoK (559 aa).

Residues methionine 1–alanine 19 form the signal peptide. The Zn(2+) site is built by aspartate 49 and threonine 89. The active-site Phosphothreonine intermediate is the threonine 89. An intrachain disulfide couples cysteine 90 to cysteine 126. Residues asparagine 110 and lysine 171–arginine 173 each bind substrate. The cysteines at positions 231 and 314 are disulfide-linked. Positions 300, 304, 345, 346, and 491 each coordinate Zn(2+). Cysteines 545 and 556 form a disulfide.

As to quaternary structure, monomer. Requires Zn(2+) as cofactor.

It localises to the secreted. It catalyses the reaction a phosphate monoester + H2O = an alcohol + phosphate. Its function is as follows. Alkaline phosphatase with broad substrate specificity. Precipitates uranium from alkaline solutions. This is Alkaline phosphatase PhoK from Sphingomonas sp.